A 340-amino-acid chain; its full sequence is Phosphoribosylformylglycinamidine cyclo-ligase (340 aa).

The protein belongs to the AIR synthase family.

It is found in the cytoplasm. The catalysed reaction is 2-formamido-N(1)-(5-O-phospho-beta-D-ribosyl)acetamidine + ATP = 5-amino-1-(5-phospho-beta-D-ribosyl)imidazole + ADP + phosphate + H(+). Its pathway is purine metabolism; IMP biosynthesis via de novo pathway; 5-amino-1-(5-phospho-D-ribosyl)imidazole from N(2)-formyl-N(1)-(5-phospho-D-ribosyl)glycinamide: step 2/2. The sequence is that of Phosphoribosylformylglycinamidine cyclo-ligase from Streptococcus pyogenes serotype M2 (strain MGAS10270).